Reading from the N-terminus, the 401-residue chain is Phosphoglycerate kinase (401 aa).

Substrate-binding positions include 26-28 (DFN), Arg41, 64-67 (HLGK), Arg125, and Arg158. ATP contacts are provided by residues Lys209, Gly300, Glu331, and 357–360 (GGDS).

It belongs to the phosphoglycerate kinase family. In terms of assembly, monomer.

Its subcellular location is the cytoplasm. It catalyses the reaction (2R)-3-phosphoglycerate + ATP = (2R)-3-phospho-glyceroyl phosphate + ADP. It functions in the pathway carbohydrate degradation; glycolysis; pyruvate from D-glyceraldehyde 3-phosphate: step 2/5. This is Phosphoglycerate kinase from Clostridium tetani (strain Massachusetts / E88).